Reading from the N-terminus, the 229-residue chain is MKLLGRKKSYGQDIETSDDNVGSEASLPDTLSRGSSTTAPKGRPTRKRDDADRRHTKKGPITPAPMTASEARARRKSLAPPKCHRAERRAKRAASKAQITDRRERMMAGEEAYLPPRDQGPVRRYIRDLVDARRNALGLFTPSALVLLFITFGVPQLQLYMSPAMLVLLSVMGIDGIILGRKISKLVDVKFPSNTESHWRLGLYAAGRASQMRRLRVPRPQVEHGSSVG.

A disordered region spans residues 1-102 (MKLLGRKKSY…AASKAQITDR (102 aa)). Residues 73–94 (ARRKSLAPPKCHRAERRAKRAA) are compositionally biased toward basic residues. 2 helical membrane-spanning segments follow: residues 137–157 (LGLFTPSALVLLFITFGVPQL) and 159–179 (LYMSPAMLVLLSVMGIDGIIL).

The protein localises to the cell membrane. This is an uncharacterized protein from Mycobacterium leprae (strain TN).